Here is a 340-residue protein sequence, read N- to C-terminus: Glyceraldehyde-3-phosphate dehydrogenase (340 aa).

NAD(+) is bound by residues 11-12 (SI) and G111. Position 140-142 (140-142 (SCN)) interacts with D-glyceraldehyde 3-phosphate. C141 functions as the Nucleophile in the catalytic mechanism. R169 contributes to the NAD(+) binding site. 195–196 (HG) serves as a coordination point for D-glyceraldehyde 3-phosphate. Q303 serves as a coordination point for NAD(+).

The protein belongs to the glyceraldehyde-3-phosphate dehydrogenase family. As to quaternary structure, homotetramer.

Its subcellular location is the cytoplasm. The enzyme catalyses D-glyceraldehyde 3-phosphate + phosphate + NADP(+) = (2R)-3-phospho-glyceroyl phosphate + NADPH + H(+). The catalysed reaction is D-glyceraldehyde 3-phosphate + phosphate + NAD(+) = (2R)-3-phospho-glyceroyl phosphate + NADH + H(+). Its pathway is carbohydrate degradation; glycolysis; pyruvate from D-glyceraldehyde 3-phosphate: step 1/5. The protein is Glyceraldehyde-3-phosphate dehydrogenase of Methanococcus maripaludis (strain C7 / ATCC BAA-1331).